An 885-amino-acid polypeptide reads, in one-letter code: Protein PTHB1 (885 aa).

Residues 1-406 (MSLFKARDWW…LQGVWPLTEQ (406 aa)) form a seven-bladed beta-propeller region. An interaction with LZTL1 region spans residues 684-764 (RDKTPAPLQH…FLPLQEDTQE (81 aa)).

Part of BBSome complex, that contains BBS1, BBS2, BBS4, BBS5, BBS7, BBS8/TTC8, BBS9 and BBIP10. Interacts with LZTL1; the interaction mediates the association of LZTL1 with the BBsome complex and regulates BBSome ciliary trafficking.

The protein resides in the cell projection. It is found in the cilium membrane. It localises to the cytoplasm. Its subcellular location is the cytoskeleton. The protein localises to the microtubule organizing center. The protein resides in the centrosome. It is found in the centriolar satellite. Functionally, the BBSome complex is thought to function as a coat complex required for sorting of specific membrane proteins to the primary cilia. The BBSome complex is required for ciliogenesis but is dispensable for centriolar satellite function. This ciliogenic function is mediated in part by the Rab8 GDP/GTP exchange factor, which localizes to the basal body and contacts the BBSome. Rab8(GTP) enters the primary cilium and promotes extension of the ciliary membrane. Firstly the BBSome associates with the ciliary membrane and binds to RAB3IP/Rabin8, the guanosyl exchange factor (GEF) for Rab8 and then the Rab8-GTP localizes to the cilium and promotes docking and fusion of carrier vesicles to the base of the ciliary membrane. Required for proper BBSome complex assembly and its ciliary localization. The protein is Protein PTHB1 (Bbs9) of Mus musculus (Mouse).